A 498-amino-acid chain; its full sequence is ATP synthase subunit beta, chloroplastic (498 aa).

Over residues 1 to 14 (MRTNPTTSRPGVST) the composition is skewed to polar residues. Residues 1-20 (MRTNPTTSRPGVSTSEEKST) are disordered. Position 172 to 179 (172 to 179 (GGAGVGKT)) interacts with ATP.

The protein belongs to the ATPase alpha/beta chains family. F-type ATPases have 2 components, CF(1) - the catalytic core - and CF(0) - the membrane proton channel. CF(1) has five subunits: alpha(3), beta(3), gamma(1), delta(1), epsilon(1). CF(0) has four main subunits: a(1), b(1), b'(1) and c(9-12).

It is found in the plastid. It localises to the chloroplast thylakoid membrane. It catalyses the reaction ATP + H2O + 4 H(+)(in) = ADP + phosphate + 5 H(+)(out). Functionally, produces ATP from ADP in the presence of a proton gradient across the membrane. The catalytic sites are hosted primarily by the beta subunits. In Hordeum vulgare (Barley), this protein is ATP synthase subunit beta, chloroplastic.